Here is a 571-residue protein sequence, read N- to C-terminus: Plastidial pyruvate kinase 3, chloroplastic (571 aa).

The transit peptide at 1-55 (MAAYGQISSGMTVDPQVLSSSRNIGVSLSPLRRTLIGAGVRSTSISLRQCSLSVR) directs the protein to the chloroplast. Residue Arg129 coordinates substrate. Residues Asn131, Ser133, Asp164, and Thr165 each coordinate K(+). 131–134 (NMSH) serves as a coordination point for ATP. Position 171 (Arg171) interacts with ATP. Position 314 (Lys314) interacts with substrate. Mg(2+) is bound at residue Glu316. Gly339, Asp340, and Thr372 together coordinate substrate. Position 340 (Asp340) interacts with Mg(2+).

This sequence belongs to the pyruvate kinase family. Oligomer of alpha and beta subunits. It depends on Mg(2+) as a cofactor. Requires K(+) as cofactor. As to expression, expressed at low levels in roots, leaves, inflorescences, siliques, pollen, seeds and flowers.

It localises to the plastid. Its subcellular location is the chloroplast stroma. It carries out the reaction pyruvate + ATP = phosphoenolpyruvate + ADP + H(+). The protein operates within carbohydrate degradation; glycolysis; pyruvate from D-glyceraldehyde 3-phosphate: step 5/5. In terms of biological role, required for plastidial pyruvate kinase activity. This chain is Plastidial pyruvate kinase 3, chloroplastic (PKP3), found in Arabidopsis thaliana (Mouse-ear cress).